We begin with the raw amino-acid sequence, 164 residues long: Peptidyl-prolyl cis-trans isomerase (164 aa).

One can recognise a PPIase cyclophilin-type domain in the interval 7-163; it reads FFDLQANGEN…KKITIADCGQ (157 aa).

It belongs to the cyclophilin-type PPIase family. PPIase A subfamily.

It is found in the cytoplasm. The catalysed reaction is [protein]-peptidylproline (omega=180) = [protein]-peptidylproline (omega=0). Its activity is regulated as follows. Binds cyclosporin A (CsA). CsA mediates some of its effects via an inhibitory action on PPIase. Its function is as follows. PPIases accelerate the folding of proteins. It catalyzes the cis-trans isomerization of proline imidic peptide bonds in oligopeptides. This Hemicentrotus pulcherrimus (Sea urchin) protein is Peptidyl-prolyl cis-trans isomerase.